The chain runs to 585 residues: Formate--tetrahydrofolate ligase (585 aa).

65 to 72 (TPHGEGKT) is a binding site for ATP.

This sequence belongs to the formate--tetrahydrofolate ligase family.

It catalyses the reaction (6S)-5,6,7,8-tetrahydrofolate + formate + ATP = (6R)-10-formyltetrahydrofolate + ADP + phosphate. The protein operates within one-carbon metabolism; tetrahydrofolate interconversion. The protein is Formate--tetrahydrofolate ligase of Shewanella baltica (strain OS195).